We begin with the raw amino-acid sequence, 542 residues long: Chitinase 2 (542 aa).

A signal peptide spans 1-22; sequence MLTRTFLGMAISAFLASTGVQA. The GH18 domain occupies 29–314; it reads PNVMYYWGQN…SQLYSLVHSG (286 aa). E166 (proton donor) is an active-site residue. The interval 312 to 356 is disordered; that stretch reads HSGGSTPPPPSSSSATKTTTKTTATSTKTTTTTAPTATSTPGSCP. Residues 323–354 show a composition bias toward low complexity; the sequence is SSSATKTTTKTTATSTKTTTTTAPTATSTPGS. Positions 355-406 are chitin-binding, high affinity; it reads CPVANQPCSTQNQYACTADGKYAVCDHGKWVASSCPSNTVCIPTTDGASIYC. Positions 447–542 are excised as a propeptide; sequence AQLAVTSTDK…APSTSAWNFK (96 aa).

It belongs to the glycosyl hydrolase 18 family. Chitinase class III subfamily. In terms of assembly, monomer. O-glycosylated.

The protein localises to the secreted. The catalysed reaction is Random endo-hydrolysis of N-acetyl-beta-D-glucosaminide (1-&gt;4)-beta-linkages in chitin and chitodextrins.. Its function is as follows. Probably involved in the apical growth and branching of fungal hyphae. The polypeptide is Chitinase 2 (CHI2) (Rhizopus oligosporus (Rhizopus microsporus var. oligosporus)).